The sequence spans 71 residues: Phosphatidylinositol N-acetylglucosaminyltransferase subunit Y (71 aa).

The Cytoplasmic segment spans residues 1–5 (MIRSL). A helical membrane pass occupies residues 6–26 (PTMTVLIPLVSLAGLLYSASV). Residues 27–44 (EEGFPEGCTSASSLCFYS) lie on the Lumenal side of the membrane. The chain crosses the membrane as a helical span at residues 45 to 65 (LLLPVTVPVYVFFHLWTWMGL). Residues 66-71 (KLFRHN) lie on the Cytoplasmic side of the membrane.

As to quaternary structure, component of the glycosylphosphatidylinositol-N-acetylglucosaminyltransferase (GPI-GnT) complex composed at least by PIGA, PIGC, PIGH, PIGP, PIGQ, PIGY and DPM2. Interacts directly with PIGA; this interaction regulates glycosylphosphatidylinositol-N-acetylglucosaminyltransferase activity. Does not interact with Ras proteins.

It is found in the endoplasmic reticulum membrane. The protein operates within glycolipid biosynthesis; glycosylphosphatidylinositol-anchor biosynthesis. In terms of biological role, part of the glycosylphosphatidylinositol-N-acetylglucosaminyltransferase (GPI-GnT) complex that catalyzes the transfer of N-acetylglucosamine from UDP-N-acetylglucosamine to phosphatidylinositol and participates in the first step of GPI biosynthesis. May act by regulating the catalytic subunit PIGA. The polypeptide is Phosphatidylinositol N-acetylglucosaminyltransferase subunit Y (Mus musculus (Mouse)).